We begin with the raw amino-acid sequence, 411 residues long: Serine--tRNA ligase (411 aa).

226 to 228 (TSE) provides a ligand contact to L-serine. 257 to 259 (RKE) is an ATP binding site. Position 280 (Glu-280) interacts with L-serine. 344 to 347 (EISS) contributes to the ATP binding site. Ser-379 contributes to the L-serine binding site.

The protein belongs to the class-II aminoacyl-tRNA synthetase family. Type-1 seryl-tRNA synthetase subfamily. As to quaternary structure, homodimer. The tRNA molecule binds across the dimer.

The protein localises to the cytoplasm. It catalyses the reaction tRNA(Ser) + L-serine + ATP = L-seryl-tRNA(Ser) + AMP + diphosphate + H(+). The catalysed reaction is tRNA(Sec) + L-serine + ATP = L-seryl-tRNA(Sec) + AMP + diphosphate + H(+). It functions in the pathway aminoacyl-tRNA biosynthesis; selenocysteinyl-tRNA(Sec) biosynthesis; L-seryl-tRNA(Sec) from L-serine and tRNA(Sec): step 1/1. Its function is as follows. Catalyzes the attachment of serine to tRNA(Ser). Is also able to aminoacylate tRNA(Sec) with serine, to form the misacylated tRNA L-seryl-tRNA(Sec), which will be further converted into selenocysteinyl-tRNA(Sec). This is Serine--tRNA ligase from Campylobacter jejuni subsp. jejuni serotype O:23/36 (strain 81-176).